Here is a 353-residue protein sequence, read N- to C-terminus: H(2)-forming methylenetetrahydromethanopterin dehydrogenase-related protein MJ1338 (353 aa).

The protein belongs to the HMD family.

This Methanocaldococcus jannaschii (strain ATCC 43067 / DSM 2661 / JAL-1 / JCM 10045 / NBRC 100440) (Methanococcus jannaschii) protein is H(2)-forming methylenetetrahydromethanopterin dehydrogenase-related protein MJ1338.